A 195-amino-acid chain; its full sequence is MFSNVGWGEVLVLLIVALFLIGPERLPGLIKEVRAMLLAVRNAISQAKEQIDGELGEDFREFSKPLQELNSVRQMGAKGFITKTLLDGDDSFLTSFNETKQDVKDTVDTVRKPNLRESLKADKTKKSAQPQPSLASGSADNGGIAVTQQSNAGESRSSHDSPVADAAEQLTGDVGSASEPKEKPSAPGYGWEDVT.

A helical transmembrane segment spans residues 2–22 (FSNVGWGEVLVLLIVALFLIG). The segment covering 103–125 (VKDTVDTVRKPNLRESLKADKTK) has biased composition (basic and acidic residues). Residues 103-195 (VKDTVDTVRK…APGYGWEDVT (93 aa)) form a disordered region. Polar residues-rich tracts occupy residues 127-139 (SAQPQPSLASGSA) and 146-155 (VTQQSNAGES).

It belongs to the TatB family. The Tat system comprises two distinct complexes: a TatABC complex, containing multiple copies of TatA, TatB and TatC subunits, and a separate TatA complex, containing only TatA subunits. Substrates initially bind to the TatABC complex, which probably triggers association of the separate TatA complex to form the active translocon.

Its subcellular location is the cell membrane. Part of the twin-arginine translocation (Tat) system that transports large folded proteins containing a characteristic twin-arginine motif in their signal peptide across membranes. Together with TatC, TatB is part of a receptor directly interacting with Tat signal peptides. TatB may form an oligomeric binding site that transiently accommodates folded Tat precursor proteins before their translocation. The protein is Sec-independent protein translocase protein TatB of Corynebacterium jeikeium (strain K411).